The primary structure comprises 104 residues: MNIMKMMKQVQQMQAGLAAAQEKLASQTVTTEGAGGKLKVTATCDGNLTELVIDPSIIDPSDSEFLQELLLQTINAAIAKGKETAAAEMKKLTGGLDLPPGMGF.

This sequence belongs to the YbaB/EbfC family. Homodimer.

Its subcellular location is the cytoplasm. The protein resides in the nucleoid. Its function is as follows. Binds to DNA and alters its conformation. May be involved in regulation of gene expression, nucleoid organization and DNA protection. This chain is Nucleoid-associated protein Amuc_1227, found in Akkermansia muciniphila (strain ATCC BAA-835 / DSM 22959 / JCM 33894 / BCRC 81048 / CCUG 64013 / CIP 107961 / Muc).